A 245-amino-acid polypeptide reads, in one-letter code: Methyltransferase-like protein 27 (245 aa).

The sequence is that of Methyltransferase-like protein 27 from Homo sapiens (Human).